Here is a 295-residue protein sequence, read N- to C-terminus: sn-glycerol-3-phosphate transport system permease protein UgpA (295 aa).

Over 1 to 11 the chain is Cytoplasmic; that stretch reads MSSSRPVFRSR. The helical transmembrane segment at 12–32 threads the bilayer; that stretch reads WLPYLLVAPQLIITVIFFIWP. Residues 33–80 are Periplasmic-facing; that stretch reads AGEALWYSLQSVDPFGFSSQFVGLDNFVTLFHDSYYLDAFWTTIKFST. Residues 76-284 enclose the ABC transmembrane type-1 domain; it reads IKFSTFVTVS…FLVIVLTVVQ (209 aa). The helical transmembrane segment at 81–101 threads the bilayer; that stretch reads FVTVSGLLVSLFFAALVEYIV. Over 102–109 the chain is Cytoplasmic; that stretch reads RGSRFYQT. A helical transmembrane segment spans residues 110-130; it reads LMLLPYAVAPAVAAVLWIFLF. The Periplasmic portion of the chain corresponds to 131-156; that stretch reads NPGRGLITHFLAEFGYDWNHAQNSGQ. The helical transmembrane segment at 157 to 177 threads the bilayer; sequence AMFLVVFASVWKQISYNFLFF. Topologically, residues 178–207 are cytoplasmic; the sequence is YAALQSIPRSLIEAAAIDGAGPIRRFFKIA. Residues 208 to 228 traverse the membrane as a helical segment; that stretch reads LPLIAPVSFFLLVVNLVYAFF. At 229–262 the chain is on the periplasmic side; the sequence is DTFPVIDAATSGGPVQATTTLIYKIYREGFTGLD. A helical membrane pass occupies residues 263–283; that stretch reads LASSAAQSVVLMFLVIVLTVV. Over 284–295 the chain is Cytoplasmic; the sequence is QFRYVEGKVRYQ.

Belongs to the binding-protein-dependent transport system permease family. UgpAE subfamily. In terms of assembly, the complex is composed of two ATP-binding proteins (UgpC), two transmembrane proteins (UgpA and UgpE) and a solute-binding protein (UgpB).

It is found in the cell inner membrane. In terms of biological role, part of the ABC transporter complex UgpBAEC involved in sn-glycerol-3-phosphate (G3P) import. Probably responsible for the translocation of the substrate across the membrane. This chain is sn-glycerol-3-phosphate transport system permease protein UgpA (ugpA), found in Escherichia coli O6:K15:H31 (strain 536 / UPEC).